Here is a 420-residue protein sequence, read N- to C-terminus: Gamma-glutamyl phosphate reductase (420 aa).

The protein belongs to the gamma-glutamyl phosphate reductase family.

Its subcellular location is the cytoplasm. The enzyme catalyses L-glutamate 5-semialdehyde + phosphate + NADP(+) = L-glutamyl 5-phosphate + NADPH + H(+). It participates in amino-acid biosynthesis; L-proline biosynthesis; L-glutamate 5-semialdehyde from L-glutamate: step 2/2. Its function is as follows. Catalyzes the NADPH-dependent reduction of L-glutamate 5-phosphate into L-glutamate 5-semialdehyde and phosphate. The product spontaneously undergoes cyclization to form 1-pyrroline-5-carboxylate. The protein is Gamma-glutamyl phosphate reductase of Alkalilimnicola ehrlichii (strain ATCC BAA-1101 / DSM 17681 / MLHE-1).